The sequence spans 441 residues: Proline--tRNA ligase (441 aa).

The protein belongs to the class-II aminoacyl-tRNA synthetase family. ProS type 2 subfamily. As to quaternary structure, homodimer.

It is found in the cytoplasm. It carries out the reaction tRNA(Pro) + L-proline + ATP = L-prolyl-tRNA(Pro) + AMP + diphosphate. Catalyzes the attachment of proline to tRNA(Pro) in a two-step reaction: proline is first activated by ATP to form Pro-AMP and then transferred to the acceptor end of tRNA(Pro). This chain is Proline--tRNA ligase, found in Bartonella tribocorum (strain CIP 105476 / IBS 506).